A 164-amino-acid polypeptide reads, in one-letter code: V-type proton ATPase subunit c' (164 aa).

At 1–14 the chain is on the vacuolar side; the sequence is MSTQLASNIYAPLY. A helical transmembrane segment spans residues 15–37; the sequence is APFFGFAGCAAAMVLSCLGAAIG. The Cytoplasmic segment spans residues 38 to 59; it reads TAKSGIGIAGIGTFKPELIMKS. A helical membrane pass occupies residues 60 to 80; sequence LIPVVMSGILAIYGLVVAVLI. The Vacuolar segment spans residues 81 to 98; it reads AGNLSPTEDYTLFNGFMH. The chain crosses the membrane as a helical span at residues 99–120; it reads LSCGLCVGFACLSSGYAIGMVG. Over 121 to 132 the chain is Cytoplasmic; it reads DVGVRKYMHQPR. Residues 133-158 form a helical membrane-spanning segment; that stretch reads LFVGIVLILIFSEVLGLYGMIVALIL. The Vacuolar portion of the chain corresponds to 159–164; the sequence is NTRGSE.

This sequence belongs to the V-ATPase proteolipid subunit family. As to quaternary structure, V-ATPase is a heteromultimeric enzyme composed of a peripheral catalytic V1 complex (components A to H) attached to an integral membrane V0 proton pore complex (components: a, c, c', c'', d, e, f and VOA1). The decameric c-ring forms the proton-conducting pore, and is composed of eight proteolipid subunits c, one subunit c' and one subunit c''.

Its subcellular location is the vacuole membrane. Proton-conducting pore forming subunit of the V0 complex of vacuolar(H+)-ATPase (V-ATPase), a multisubunit enzyme composed of a peripheral complex (V1) that hydrolyzes ATP and a membrane integral complex (V0) that translocates protons. V-ATPase is responsible for acidifying and maintaining the pH of intracellular compartments. The sequence is that of V-type proton ATPase subunit c' (VMA11) from Saccharomyces cerevisiae (strain ATCC 204508 / S288c) (Baker's yeast).